A 561-amino-acid polypeptide reads, in one-letter code: MCGIWALFGSDDCLSVQCLSAMKIAHRGPDAFRFENVNGYTNCCFGFHRLAVVDPLFGMQPIRVKKYPYLWLCYNGEIYNHKALQQRFEFEYQTNVDGEIILHLYDKGGIEQTICMLDGVFAFILLDTANKKVFLGRDTYGVRPLFKAMTEDGFLAVCSEAKGLVSLKHSTTPFLKVEPFLPGHYEVLDLKPNGKVASVEMVKYHHCRDEPLHALYDSVEKLFPGFELETVKSNLRILFDNAVRKRLMTDRRIVCLLSGGLDSSLVASSLLKQLKEAQVQYPLQTFAIGMEDSPDLLAARKVANYIGSEHHEVLFNSEEGIQALDEVIFSLETYDITTVRASVGMYLISKYIRKNTDSVVIFSGEGSDELTQGYIYFHKAPSPEKAEEESERLLKELYLFDVLRADRTTAAHGLELRVPFLDHRFSSYYLSLPPEMRVPKNGIEKHLLRETFEDSNLLPKEILWRPKEAFSDGITSVKNSWFKILQDYVEHQVDDAMMATAAQKFPFNTPKTKEGYFYRQIFEHHYPGRADWLTHYWMPKWINATDPSARTLTHYKSAAKA.

The active-site For GATase activity is Cys-2. In terms of domain architecture, Glutamine amidotransferase type-2 spans 2–191 (CGIWALFGSD…PGHYEVLDLK (190 aa)). Residues 49–53 (RLAVV), 75–77 (NGE), and Asp-97 contribute to the L-glutamine site. Residues 213–536 (HALYDSVEKL…PGRADWLTHY (324 aa)) enclose the Asparagine synthetase domain. Residues Leu-256, Ile-288, and 363–364 (SG) contribute to the ATP site. An N6-acetyllysine modification is found at Lys-385. Thr-545 is modified (phosphothreonine). At Ser-557 the chain carries Phosphoserine.

It catalyses the reaction L-aspartate + L-glutamine + ATP + H2O = L-asparagine + L-glutamate + AMP + diphosphate + H(+). It participates in amino-acid biosynthesis; L-asparagine biosynthesis; L-asparagine from L-aspartate (L-Gln route): step 1/1. The sequence is that of Asparagine synthetase [glutamine-hydrolyzing] (ASNS) from Mesocricetus auratus (Golden hamster).